Here is a 523-residue protein sequence, read N- to C-terminus: Pituitary adenylate cyclase-activating polypeptide type I receptor (523 aa).

An N-terminal signal peptide occupies residues 1 to 19 (MARVLQLSLTALLLPVAIA). The Extracellular segment spans residues 20-151 (MHSDCIFKKE…SGDQDYYYLS (132 aa)). Disulfide bonds link Cys33-Cys62, Cys53-Cys117, and Cys76-Cys133. N-linked (GlcNAc...) asparagine glycosylation is found at Asn47, Asn59, and Asn116. An important for ADCYAP1/PACAP ligand binding and specificity region spans residues 124–138 (EPFPHYFDACGFDDY). Residues 124–138 (EPFPHYFDACGFDDY) are important for ligand binding and specificity. The chain crosses the membrane as a helical span at residues 152-176 (VKALYTVGYSTSLATLTTAMVILCR). Topologically, residues 177–186 (FRKLHCTRNF) are cytoplasmic. The chain crosses the membrane as a helical span at residues 187 to 207 (IHMNLFVSFMLRAISVFIKDW). The Extracellular segment spans residues 208-222 (ILYAEQDSSHCFVST). The helical transmembrane segment at 223-248 (VECKAVMVFFHYCVVSNYFWLFIEGL) threads the bilayer. A disulfide bridge connects residues Cys225 and Cys295. Topologically, residues 249–266 (YLFTLLVETFFPERRYFY) are cytoplasmic. A helical membrane pass occupies residues 267 to 289 (WYTIIGWGTPTVCVTVWAVLRLY). At 290–301 (FDDAGCWDMNDS) the chain is on the extracellular side. A helical transmembrane segment spans residues 302–328 (TALWWVIKGPVVGSIMVNFVLFIGIII). The Cytoplasmic portion of the chain corresponds to 329–346 (ILVQKLQSPDMGGNESSI). Residues 347-429 (YLTNLRLRVP…HYTVFAFSPE (83 aa)) traverse the membrane as a helical segment. Residues 430 to 434 (NVSKR) lie on the Extracellular side of the membrane. The helical transmembrane segment at 435 to 458 (ERLVFELGLGSFQGFVVAVLYCFL) threads the bilayer. At 459–523 (NGEVQAEIKR…SSLPADNLAT (65 aa)) the chain is on the cytoplasmic side. Ser489 and Ser502 each carry phosphoserine.

Belongs to the G-protein coupled receptor 2 family. Interacts with maxadilan, a vasodilator peptide from Lutzomyia longipalpis saliva; the interaction results in ADCYAP1R1 activation. As to expression, hypothalamus, anterior pituitary, adrenal medulla, testicular germ cells.

Its subcellular location is the cell membrane. Its function is as follows. G protein-coupled receptor activated by the neuropeptide pituitary adenylate cyclase-activating polypeptide (ADCYAP1/PACAP). Binds both PACAP27 and PACAP38 bioactive peptides. Ligand binding causes a conformation change that triggers signaling via guanine nucleotide-binding proteins (G proteins) and modulates the activity of downstream effectors. Activates cAMP-dependent pathway. May regulate the release of adrenocorticotropin, luteinizing hormone, growth hormone, prolactin, epinephrine, and catecholamine. May play a role in spermatogenesis and sperm motility. Causes smooth muscle relaxation and secretion in the gastrointestinal tract. The polypeptide is Pituitary adenylate cyclase-activating polypeptide type I receptor (Rattus norvegicus (Rat)).